The chain runs to 163 residues: D-aminoacyl-tRNA deacylase (163 aa).

Residues 141-142 (GP) carry the Gly-cisPro motif, important for rejection of L-amino acids motif.

It belongs to the DTD family. Homodimer.

Its subcellular location is the cytoplasm. The enzyme catalyses glycyl-tRNA(Ala) + H2O = tRNA(Ala) + glycine + H(+). The catalysed reaction is a D-aminoacyl-tRNA + H2O = a tRNA + a D-alpha-amino acid + H(+). An aminoacyl-tRNA editing enzyme that deacylates mischarged D-aminoacyl-tRNAs. Also deacylates mischarged glycyl-tRNA(Ala), protecting cells against glycine mischarging by AlaRS. Acts via tRNA-based rather than protein-based catalysis; rejects L-amino acids rather than detecting D-amino acids in the active site. By recycling D-aminoacyl-tRNA to D-amino acids and free tRNA molecules, this enzyme counteracts the toxicity associated with the formation of D-aminoacyl-tRNA entities in vivo and helps enforce protein L-homochirality. This Neisseria meningitidis serogroup B (strain ATCC BAA-335 / MC58) protein is D-aminoacyl-tRNA deacylase.